Consider the following 210-residue polypeptide: ATP phosphoribosyltransferase (210 aa).

It belongs to the ATP phosphoribosyltransferase family. Short subfamily. In terms of assembly, heteromultimer composed of HisG and HisZ subunits.

It localises to the cytoplasm. The catalysed reaction is 1-(5-phospho-beta-D-ribosyl)-ATP + diphosphate = 5-phospho-alpha-D-ribose 1-diphosphate + ATP. The protein operates within amino-acid biosynthesis; L-histidine biosynthesis; L-histidine from 5-phospho-alpha-D-ribose 1-diphosphate: step 1/9. Functionally, catalyzes the condensation of ATP and 5-phosphoribose 1-diphosphate to form N'-(5'-phosphoribosyl)-ATP (PR-ATP). Has a crucial role in the pathway because the rate of histidine biosynthesis seems to be controlled primarily by regulation of HisG enzymatic activity. The protein is ATP phosphoribosyltransferase of Picosynechococcus sp. (strain ATCC 27264 / PCC 7002 / PR-6) (Agmenellum quadruplicatum).